We begin with the raw amino-acid sequence, 109 residues long: Large ribosomal subunit protein uL22 (109 aa).

The protein belongs to the universal ribosomal protein uL22 family. Part of the 50S ribosomal subunit.

This protein binds specifically to 23S rRNA; its binding is stimulated by other ribosomal proteins, e.g. L4, L17, and L20. It is important during the early stages of 50S assembly. It makes multiple contacts with different domains of the 23S rRNA in the assembled 50S subunit and ribosome. Functionally, the globular domain of the protein is located near the polypeptide exit tunnel on the outside of the subunit, while an extended beta-hairpin is found that lines the wall of the exit tunnel in the center of the 70S ribosome. In Psychrobacter cryohalolentis (strain ATCC BAA-1226 / DSM 17306 / VKM B-2378 / K5), this protein is Large ribosomal subunit protein uL22.